The sequence spans 515 residues: Cytochrome P450 monooxygenase ptmJ (515 aa).

Helical transmembrane passes span 6–26 (LGPF…LFVI), 50–70 (LGVV…LFCV), 82–102 (VFYL…EPVV), and 300–320 (VIIL…LFLH). Cys-449 is a binding site for heme.

Belongs to the cytochrome P450 family. Heme serves as cofactor.

It localises to the membrane. The protein operates within secondary metabolite biosynthesis. Functionally, cytochrome P450 monooxygenase; part of the gene cluster that mediates the biosynthesis of the indole diterpenes penitrems. The geranylgeranyl diphosphate (GGPP) synthase ptmG catalyzes the first step in penitrem biosynthesis via conversion of farnesyl pyrophosphate and isopentyl pyrophosphate into geranylgeranyl pyrophosphate (GGPP). Condensation of indole-3-glycerol phosphate with GGPP by the prenyl transferase ptmC then forms 3-geranylgeranylindole (3-GGI). Epoxidation by the FAD-dependent monooxygenase ptmM leads to a epoxidized-GGI that is substrate of the terpene cyclase ptmB for cyclization to yield paspaline. Paspaline is subsequently converted to 13-desoxypaxilline by the cytochrome P450 monooxygenase ptmP, the latter being then converted to paxilline by the cytochrome P450 monooxygenase ptmQ. Paxilline is converted to beta-paxitriol via C-10 ketoreduction by the short-chain dehydrogenase ptmH which can be monoprenylated at the C-20 by the indole diterpene prenyltransferase ptmD. A two-step elimination (acetylation and elimination) process performed by the O-acetyltransferase ptmV and ptmI leads to the production of the prenylated form of penijanthine. The FAD-linked oxidoreductase ptmO then converts the prenylated form of penijanthine into PC-M5 which is in turn transformed into PC-M4 by the aromatic dimethylallyltransferase ptmE. Five sequential oxidative transformations performed by the cytochrome P450 monooxygenases ptmK, ptmU, ptmL, ptmN and ptmJ yield the various penitrem compounds. PtmK, ptmU and ptmM are involved in the formation of the key bicyclic ring of penitrem C via the formation of the intermediates secopenitrem D and penitrem D. PtmL catalyzes the epoxidation of penitrem D and C to yield penitrem B and F, respectively. PtmJ catalyzes the last benzylic hydroxylation to convert penitrem B to prenitrem E and penitrem F to penitrem A. The protein is Cytochrome P450 monooxygenase ptmJ of Penicillium ochrochloron.